The chain runs to 378 residues: Dual-specificity RNA methyltransferase RlmN (378 aa).

Glu-96 functions as the Proton acceptor in the catalytic mechanism. Residues 102-342 form the Radical SAM core domain; that stretch reads QGGRGTLCVS…VRTTRGDDID (241 aa). Cys-109 and Cys-345 are joined by a disulfide. Positions 116, 120, and 123 each coordinate [4Fe-4S] cluster. Residues 170–171, Ser-202, 224–226, and Asn-302 contribute to the S-adenosyl-L-methionine site; these read GE and SLH. Catalysis depends on Cys-345, which acts as the S-methylcysteine intermediate.

This sequence belongs to the radical SAM superfamily. RlmN family. The cofactor is [4Fe-4S] cluster.

Its subcellular location is the cytoplasm. It catalyses the reaction adenosine(2503) in 23S rRNA + 2 reduced [2Fe-2S]-[ferredoxin] + 2 S-adenosyl-L-methionine = 2-methyladenosine(2503) in 23S rRNA + 5'-deoxyadenosine + L-methionine + 2 oxidized [2Fe-2S]-[ferredoxin] + S-adenosyl-L-homocysteine. The catalysed reaction is adenosine(37) in tRNA + 2 reduced [2Fe-2S]-[ferredoxin] + 2 S-adenosyl-L-methionine = 2-methyladenosine(37) in tRNA + 5'-deoxyadenosine + L-methionine + 2 oxidized [2Fe-2S]-[ferredoxin] + S-adenosyl-L-homocysteine. In terms of biological role, specifically methylates position 2 of adenine 2503 in 23S rRNA and position 2 of adenine 37 in tRNAs. m2A2503 modification seems to play a crucial role in the proofreading step occurring at the peptidyl transferase center and thus would serve to optimize ribosomal fidelity. This chain is Dual-specificity RNA methyltransferase RlmN, found in Pseudomonas paraeruginosa (strain DSM 24068 / PA7) (Pseudomonas aeruginosa (strain PA7)).